Here is a 360-residue protein sequence, read N- to C-terminus: Peptide chain release factor 1 (360 aa).

An N5-methylglutamine modification is found at glutamine 237.

It belongs to the prokaryotic/mitochondrial release factor family. Methylated by PrmC. Methylation increases the termination efficiency of RF1.

It is found in the cytoplasm. Functionally, peptide chain release factor 1 directs the termination of translation in response to the peptide chain termination codons UAG and UAA. This is Peptide chain release factor 1 from Pseudomonas putida (strain ATCC 47054 / DSM 6125 / CFBP 8728 / NCIMB 11950 / KT2440).